The primary structure comprises 199 residues: Putative 3-methyladenine DNA glycosylase (199 aa).

This sequence belongs to the DNA glycosylase MPG family.

This chain is Putative 3-methyladenine DNA glycosylase, found in Chlorobium phaeobacteroides (strain BS1).